A 23-amino-acid polypeptide reads, in one-letter code: Caerulein precursor fragment R6 (23 aa).

As to expression, expressed by the skin glands.

Its subcellular location is the secreted. Functionally, antimicrobial peptide. The chain is Caerulein precursor fragment R6 from Xenopus ruwenzoriensis (Uganda clawed frog).